Here is a 364-residue protein sequence, read N- to C-terminus: NF-kappa-B inhibitor epsilon (364 aa).

Positions 1-108 (MSDARKGPDE…GSPLPPAGVL (108 aa)) are disordered. Serine 18 carries the phosphoserine modification. A compositionally biased stretch (low complexity) spans 36–48 (PGSGSSQSGCPQP). A compositionally biased stretch (basic and acidic residues) spans 51–70 (HAPETHKEPEKEDADGERAD). The segment covering 93–104 (PSPPAPGSPLPP) has biased composition (pro residues). ANK repeat units lie at residues 122-155 (DGDT…DIQN), 157-186 (LYQT…SRIL), 190-219 (HGDT…EPGR), 233-262 (QGLA…DIDV), 267-296 (SGKT…RVDA), and 300-329 (NGCT…DSLL).

This sequence belongs to the NF-kappa-B inhibitor family. As to quaternary structure, interacts with RELA, REL, NFKB1 nuclear factor NF-kappa-B p50 subunit and NFKB2 nuclear factor NF-kappa-B p52 subunit. Interacts with HNRNPA2B1; the interaction may be mediated by the RRM2 domain of HNRNPA2B1, and HNRNPA2B1 may interact simultaneously with FAM76B and either NFKBIA or NFKBIE to form a complex. In terms of processing, serine phosphorylated; followed by proteasome-dependent degradation.

It is found in the cytoplasm. Functionally, sequesters NF-kappa-B transcription factor complexes in the cytoplasm, thereby inhibiting their activity. Sequestered complexes include NFKB1/p50-RELA/p65 and NFKB1/p50-REL/c-Rel complexes. Limits B-cell activation in response to pathogens, and also plays an important role in B-cell development. This chain is NF-kappa-B inhibitor epsilon (Nfkbie), found in Mus musculus (Mouse).